A 418-amino-acid chain; its full sequence is Putative F-box protein At1g20795 (418 aa).

Residues 1–46 (METLGLPLPLFEKILFRLDPISLVMMKCTRRSFNSHISEDPYFKSK) enclose the F-box domain.

This is Putative F-box protein At1g20795 from Arabidopsis thaliana (Mouse-ear cress).